We begin with the raw amino-acid sequence, 118 residues long: uncharacterized protein (118 aa).

The HTH hxlR-type domain occupies 6–104 (CGFEVTKEVI…WGGYYAEQEY (99 aa)).

This is an uncharacterized protein from Bacillus subtilis (strain 168).